Consider the following 738-residue polypeptide: Putative RNA-binding protein EEED8.10 (738 aa).

Residues 112–201 (RKIVVSNISA…QVMVVSAYVS (90 aa)) enclose the RRM domain. Residues 211–237 (LSDDVGSREDTPLSRASSTQSLASGSE) are disordered. A compositionally biased stretch (polar residues) spans 224 to 237 (SRASSTQSLASGSE). The 59-residue stretch at 239 to 297 (SFNLGNVPDKILRRVISFLPIHETIRLERVNKKFMEESIKSWELVNKIALARETVFNKQ) folds into the F-box domain.

This Caenorhabditis elegans protein is Putative RNA-binding protein EEED8.10.